The following is a 376-amino-acid chain: Riboflavin biosynthesis protein RibD (376 aa).

A deaminase region spans residues 1–157 (MCFPLPSNSF…PIFFHYIQTK (157 aa)). Residues 13 to 135 (MTDLDYMRRA…QLRQAGVEVV (123 aa)) enclose the CMP/dCMP-type deaminase domain. A Zn(2+)-binding site is contributed by H62. The active-site Proton donor is E64. Zn(2+) is bound by residues C87 and C96. The interval 158–376 (RPYVLMKYAM…LLDYVVISPL (219 aa)) is reductase. A166 provides a ligand contact to NADP(+). S180 contributes to the substrate binding site. W182 provides a ligand contact to NADP(+). Residue R196 coordinates substrate. T208 and D212 together coordinate NADP(+). Positions 216 and 219 each coordinate substrate. Residue S233 participates in NADP(+) binding. Residue E304 coordinates substrate. 306–312 (GSSLNFS) is an NADP(+) binding site.

In the N-terminal section; belongs to the cytidine and deoxycytidylate deaminase family. The protein in the C-terminal section; belongs to the HTP reductase family. The cofactor is Zn(2+).

It carries out the reaction 2,5-diamino-6-hydroxy-4-(5-phosphoribosylamino)-pyrimidine + H2O + H(+) = 5-amino-6-(5-phospho-D-ribosylamino)uracil + NH4(+). The enzyme catalyses 5-amino-6-(5-phospho-D-ribitylamino)uracil + NADP(+) = 5-amino-6-(5-phospho-D-ribosylamino)uracil + NADPH + H(+). The protein operates within cofactor biosynthesis; riboflavin biosynthesis; 5-amino-6-(D-ribitylamino)uracil from GTP: step 2/4. It participates in cofactor biosynthesis; riboflavin biosynthesis; 5-amino-6-(D-ribitylamino)uracil from GTP: step 3/4. Functionally, converts 2,5-diamino-6-(ribosylamino)-4(3h)-pyrimidinone 5'-phosphate into 5-amino-6-(ribosylamino)-2,4(1h,3h)-pyrimidinedione 5'-phosphate. The protein is Riboflavin biosynthesis protein RibD (ribD) of Actinobacillus pleuropneumoniae (Haemophilus pleuropneumoniae).